Reading from the N-terminus, the 596-residue chain is Pescadillo homolog (596 aa).

Residues 347 to 440 (PTSTLFSEFV…ELVPANLYLP (94 aa)) enclose the BRCT domain. A disordered region spans residues 449–552 (SPWGDSVGYD…EEKDLKLIMM (104 aa)). The stretch at 460-596 (AAELAEEEAE…TKAKLKKLEN (137 aa)) forms a coiled coil. Residues 463 to 500 (LAEEEAESEEEEEVSDEAEGDEEATLAAEEDEEDEAEA) show a composition bias toward acidic residues. The span at 501–510 (EELRAQKELE) shows a compositional bias: basic and acidic residues. The segment covering 519 to 529 (SEAADSAAPSK) has biased composition (low complexity).

Belongs to the pescadillo family. In terms of assembly, component of the NOP7 complex, composed of ERB1, NOP7 and YTM1. The complex is held together by ERB1, which interacts with NOP7 via its N-terminal domain and with YTM1 via a high-affinity interaction between the seven-bladed beta-propeller domains of the 2 proteins. The NOP7 complex associates with the 66S pre-ribosome.

It is found in the nucleus. The protein resides in the nucleolus. It localises to the nucleoplasm. Component of the NOP7 complex, which is required for maturation of the 25S and 5.8S ribosomal RNAs and formation of the 60S ribosome. The polypeptide is Pescadillo homolog (Eremothecium gossypii (strain ATCC 10895 / CBS 109.51 / FGSC 9923 / NRRL Y-1056) (Yeast)).